The sequence spans 600 residues: Putative heme-binding protein NP_2262A (600 aa).

Residue His180 participates in heme binding. The disordered stretch occupies residues 261–289 (TSETGHGGADSQTSSESSGGRPSTDPSHD). The span at 270-285 (DSQTSSESSGGRPSTD) shows a compositional bias: polar residues. Residues 510–598 (GTMGMFYTVK…VLADRPRHVF (89 aa)) form the ABM domain.

This sequence in the N-terminal section; belongs to the ChdC family.

This Natronomonas pharaonis (strain ATCC 35678 / DSM 2160 / CIP 103997 / JCM 8858 / NBRC 14720 / NCIMB 2260 / Gabara) (Halobacterium pharaonis) protein is Putative heme-binding protein NP_2262A.